The primary structure comprises 462 residues: Cysteine--tRNA ligase (462 aa).

A Zn(2+)-binding site is contributed by Cys30. The 'HIGH' region signature appears at 32–42; the sequence is MTVYDYCHVGH. The Zn(2+) site is built by Cys214, His239, and Glu243. Residues 271–275 carry the 'KMSKS' region motif; it reads KMSKS. Lys274 serves as a coordination point for ATP.

Belongs to the class-I aminoacyl-tRNA synthetase family. Monomer. Zn(2+) serves as cofactor.

It is found in the cytoplasm. The enzyme catalyses tRNA(Cys) + L-cysteine + ATP = L-cysteinyl-tRNA(Cys) + AMP + diphosphate. This chain is Cysteine--tRNA ligase, found in Cupriavidus taiwanensis (strain DSM 17343 / BCRC 17206 / CCUG 44338 / CIP 107171 / LMG 19424 / R1) (Ralstonia taiwanensis (strain LMG 19424)).